The following is a 423-amino-acid chain: Histone deacetylase 14, chloroplastic (423 aa).

The transit peptide at 1 to 44 directs the protein to the chloroplast; the sequence is MSMALIVRPFFVPGSAGISGSRNICKKNQWRKYLLKPSGSSINC. The segment at 62 to 392 is histone deacetylase; it reads DARLIYSVSA…FRALLGEDSL (331 aa). The active-site Proton donor/acceptor is the His202. Residues Asp239, His241, and Asp326 each coordinate Zn(2+).

Belongs to the histone deacetylase family. Interacts with PP2A2. The cofactor is Zn(2+). Expressed in stems, leaves, flowers, siliques and mature seeds.

Its subcellular location is the nucleus. It is found in the cytoplasm. The protein localises to the plastid. The protein resides in the chloroplast stroma. It localises to the mitochondrion. The enzyme catalyses N-acetylserotonin + H2O = serotonin + acetate. The catalysed reaction is N-acetyltyramine + H2O = tyramine + acetate. It carries out the reaction N-acetyltryptamine + H2O = tryptamine + acetate. It catalyses the reaction melatonin + H2O = 5-methoxytryptamine + acetate. With respect to regulation, its activity is inhibited by trichostatin A (TSA), a known histone deacetylase inhibitor. Functionally, regulates lysine acetylation levels of plastid proteins related to photosynthesis. Involved in the regulation of the activation state of RuBisCO, which is controlled by lysine acetylation of RuBisCO activase under low-light conditions. Associates with alpha- and beta-tubulins and deacetylate alpha-tubulin. Does not seem to be required for the cellular patterning in the root epidermis. Involved in the regulation of melatonin biosynthesis by catalyzing the deacetylation of N-acetylserotonin to produce serotonin. N-acetylserotonin is methylated by acetylserotonin O-methyltransferase (ASMT) to produce melatonin (N-acetyl-5-methoxytryptamine). Deacetylates melatonin to produce 5-methoxytryptamine. In vitro, deacetylates N-acetyltyramine and N-acetyltryptamine to produce tyramine and tryptamine, respectively. The protein is Histone deacetylase 14, chloroplastic of Arabidopsis thaliana (Mouse-ear cress).